A 156-amino-acid chain; its full sequence is Ribosomal RNA large subunit methyltransferase H (156 aa).

S-adenosyl-L-methionine-binding positions include Leu73, Gly104, and 123-128; that span reads IGPLTL.

This sequence belongs to the RNA methyltransferase RlmH family. Homodimer.

The protein localises to the cytoplasm. The catalysed reaction is pseudouridine(1915) in 23S rRNA + S-adenosyl-L-methionine = N(3)-methylpseudouridine(1915) in 23S rRNA + S-adenosyl-L-homocysteine + H(+). Functionally, specifically methylates the pseudouridine at position 1915 (m3Psi1915) in 23S rRNA. In Stenotrophomonas maltophilia (strain R551-3), this protein is Ribosomal RNA large subunit methyltransferase H.